Here is a 716-residue protein sequence, read N- to C-terminus: Fatty acid oxidation complex subunit alpha (716 aa).

The interval Met1–Ala189 is enoyl-CoA hydratase/isomerase. Asp296 lines the substrate pocket. The interval Lys311 to Ala716 is 3-hydroxyacyl-CoA dehydrogenase. NAD(+) is bound by residues Met324, Asp343, Val400–Glu402, Lys407, and Ser429. Catalysis depends on His450, which acts as the For 3-hydroxyacyl-CoA dehydrogenase activity. Asn453 lines the NAD(+) pocket. Substrate-binding residues include Asn500 and Tyr660.

In the N-terminal section; belongs to the enoyl-CoA hydratase/isomerase family. This sequence in the C-terminal section; belongs to the 3-hydroxyacyl-CoA dehydrogenase family. In terms of assembly, heterotetramer of two alpha chains (FadB) and two beta chains (FadA).

It catalyses the reaction a (3S)-3-hydroxyacyl-CoA + NAD(+) = a 3-oxoacyl-CoA + NADH + H(+). The enzyme catalyses a (3S)-3-hydroxyacyl-CoA = a (2E)-enoyl-CoA + H2O. The catalysed reaction is a 4-saturated-(3S)-3-hydroxyacyl-CoA = a (3E)-enoyl-CoA + H2O. It carries out the reaction (3S)-3-hydroxybutanoyl-CoA = (3R)-3-hydroxybutanoyl-CoA. It catalyses the reaction a (3Z)-enoyl-CoA = a 4-saturated (2E)-enoyl-CoA. The enzyme catalyses a (3E)-enoyl-CoA = a 4-saturated (2E)-enoyl-CoA. The protein operates within lipid metabolism; fatty acid beta-oxidation. In terms of biological role, involved in the aerobic and anaerobic degradation of long-chain fatty acids via beta-oxidation cycle. Catalyzes the formation of 3-oxoacyl-CoA from enoyl-CoA via L-3-hydroxyacyl-CoA. It can also use D-3-hydroxyacyl-CoA and cis-3-enoyl-CoA as substrate. This is Fatty acid oxidation complex subunit alpha from Shewanella oneidensis (strain ATCC 700550 / JCM 31522 / CIP 106686 / LMG 19005 / NCIMB 14063 / MR-1).